The following is a 1433-amino-acid chain: DNA-directed RNA polymerase subunit beta' (1433 aa).

Cysteine 66, cysteine 68, cysteine 81, and cysteine 84 together coordinate Zn(2+). The Mg(2+) site is built by aspartate 473, aspartate 475, and aspartate 477. Positions 815, 889, 896, and 899 each coordinate Zn(2+).

This sequence belongs to the RNA polymerase beta' chain family. In terms of assembly, the RNAP catalytic core consists of 2 alpha, 1 beta, 1 beta' and 1 omega subunit. When a sigma factor is associated with the core the holoenzyme is formed, which can initiate transcription. It depends on Mg(2+) as a cofactor. Requires Zn(2+) as cofactor.

The enzyme catalyses RNA(n) + a ribonucleoside 5'-triphosphate = RNA(n+1) + diphosphate. Functionally, DNA-dependent RNA polymerase catalyzes the transcription of DNA into RNA using the four ribonucleoside triphosphates as substrates. The sequence is that of DNA-directed RNA polymerase subunit beta' from Porphyromonas gingivalis (strain ATCC BAA-308 / W83).